Here is a 292-residue protein sequence, read N- to C-terminus: Malonyl-S-ACP:biotin-protein carboxyltransferase MADD (292 aa).

The 281-residue stretch at 1-281 folds into the CoA carboxyltransferase C-terminal domain; sequence MEIMMGQGRL…RGKVMAMMDK (281 aa).

It is found in the cytoplasm. It carries out the reaction N(6)-biotinyl-L-lysyl-[protein] + malonyl-[ACP] = N(6)-carboxybiotinyl-L-lysyl-[protein] + acetyl-[ACP]. Functionally, gamma subunit of the biotin-dependent malonate decarboxylase multienzyme complex (EC 7.2.4.4). The two subunits MADC and MADD are required for the transfer of the malonate carboxy group from the acyl-carrier protein (ACP) to the prosthetic group of the biotin carrier MADF. Required for the regeneration of ACP. This Malonomonas rubra protein is Malonyl-S-ACP:biotin-protein carboxyltransferase MADD (madD).